A 503-amino-acid chain; its full sequence is REST corepressor 2 (503 aa).

Positions 1–62 (MPSVMEKSHG…IPECKPDNTS (62 aa)) are disordered. In terms of domain architecture, ELM2 spans 41 to 126 (SMIRVGSDYQ…RSLADLANFT (86 aa)). Positions 127 to 178 (PFPEEWSVEDKVLFEQAFSFHGKSFQRIQQMLPEKLIPSLVKYYYSWKKTRS) constitute an SANT 1 domain. Coiled coils occupy residues 182–206 (VMDR…DQIK) and 286–314 (QLET…SLEG). Positions 327-378 (KLNARWTTDEQLLAVQAVRKYGKDFQAISEVLGNKTPSQVKTFFISYRRRFN) constitute an SANT 2 domain. The disordered stretch occupies residues 385-503 (EWEAEQEPSP…VGSHAESTFS (119 aa)). The segment covering 399–412 (TDMSNKTSGSSQTP) has biased composition (polar residues). Low complexity predominate over residues 423-442 (SVSSSSQPAPPAAAAAASLS).

It belongs to the CoREST family.

It localises to the nucleus. In terms of biological role, may act as a component of a corepressor complex that represses transcription. The chain is REST corepressor 2 (rcor2) from Xenopus laevis (African clawed frog).